A 97-amino-acid polypeptide reads, in one-letter code: uncharacterized protein (97 aa).

This is an uncharacterized protein from Escherichia coli (Bacteriophage T4).